We begin with the raw amino-acid sequence, 427 residues long: POU domain protein CF1A (427 aa).

Disordered stretches follow at residues 39 to 77 (YMQH…GLGS), 196 to 217 (HHHM…TPTS), 288 to 309 (TTGS…KKRT), and 390 to 427 (HDMH…LAAH). The segment covering 49 to 66 (AAAAAAHHQLPSSPSPNG) has biased composition (low complexity). Positions 67–77 (QGNGGGLGLGS) are enriched in gly residues. The region spanning 212-286 (EDTPTSDDLE…LLQKWLEEAD (75 aa)) is the POU-specific domain. The homeobox DNA-binding region spans 304–363 (KRKKRTSIEVSVKGALEQHFHKQPKPSAQEITSLADSLQLEKEVVRVWFCNRRQKEKRMT).

It belongs to the POU transcription factor family. Class-3 subfamily. Coexpressed with acj6 in overlapping subsets of neurons in the embryonic epidermis and central nervous system. First detected in the precursor of the tracheal pits and the stomodeal invagination and later in the peripheral nervous system.

It localises to the nucleus. Functionally, binds to a DNA sequence element required for the expression of the dopa decarboxylase gene (Ddc) in specific dopaminergic neurons. Could also play an early role in specific ectodermal cells, and a subsequent role in the embryonic nervous system. In Drosophila melanogaster (Fruit fly), this protein is POU domain protein CF1A (vvl).